The chain runs to 312 residues: Glycerol-3-phosphate dehydrogenase [NAD(P)+] (312 aa).

4 residues coordinate NADPH: tryptophan 11, arginine 30, arginine 31, and lysine 95. 3 residues coordinate sn-glycerol 3-phosphate: lysine 95, glycine 123, and serine 125. Residue alanine 127 coordinates NADPH. The sn-glycerol 3-phosphate site is built by lysine 177, aspartate 230, serine 240, arginine 241, and asparagine 242. Lysine 177 (proton acceptor) is an active-site residue. Arginine 241 is a binding site for NADPH. NADPH is bound by residues valine 265 and glutamate 267.

This sequence belongs to the NAD-dependent glycerol-3-phosphate dehydrogenase family.

It is found in the cytoplasm. It carries out the reaction sn-glycerol 3-phosphate + NAD(+) = dihydroxyacetone phosphate + NADH + H(+). The catalysed reaction is sn-glycerol 3-phosphate + NADP(+) = dihydroxyacetone phosphate + NADPH + H(+). It functions in the pathway membrane lipid metabolism; glycerophospholipid metabolism. In terms of biological role, catalyzes the reduction of the glycolytic intermediate dihydroxyacetone phosphate (DHAP) to sn-glycerol 3-phosphate (G3P), the key precursor for phospholipid synthesis. This chain is Glycerol-3-phosphate dehydrogenase [NAD(P)+], found in Helicobacter acinonychis (strain Sheeba).